We begin with the raw amino-acid sequence, 254 residues long: MNRRHRIYEGKAKILYEGPEPGTYIQFFKDDATAFNAKKHEVIDGKGVLNNRISEHIFSHLGRLGIPTHFIKRINMREQLIKAVEIIPLEVVVRNVAAGSLSKRLGLEEGTVLSQSIIEFYYKNDSLDDPMVTEEHITAFGWAVPQEIEDIMQLSIRINDFLSGLFAAANIQLIDFKMEFGRLWEDEAMRIVLADEISPDSARLWDMQTREKMDKDRFRRNMGGLINAYQEVAKRLGIINENEPPRPSGPVLVK.

Belongs to the SAICAR synthetase family.

The enzyme catalyses 5-amino-1-(5-phospho-D-ribosyl)imidazole-4-carboxylate + L-aspartate + ATP = (2S)-2-[5-amino-1-(5-phospho-beta-D-ribosyl)imidazole-4-carboxamido]succinate + ADP + phosphate + 2 H(+). It functions in the pathway purine metabolism; IMP biosynthesis via de novo pathway; 5-amino-1-(5-phospho-D-ribosyl)imidazole-4-carboxamide from 5-amino-1-(5-phospho-D-ribosyl)imidazole-4-carboxylate: step 1/2. The sequence is that of Phosphoribosylaminoimidazole-succinocarboxamide synthase from Bartonella quintana (strain Toulouse) (Rochalimaea quintana).